The primary structure comprises 206 residues: FMN-dependent NADH:quinone oxidoreductase 2 (206 aa).

Residues serine 10, 16–18 (SYS), and 140–143 (SCGG) contribute to the FMN site.

The protein belongs to the azoreductase type 1 family. In terms of assembly, homodimer. It depends on FMN as a cofactor.

The catalysed reaction is 2 a quinone + NADH + H(+) = 2 a 1,4-benzosemiquinone + NAD(+). The enzyme catalyses N,N-dimethyl-1,4-phenylenediamine + anthranilate + 2 NAD(+) = 2-(4-dimethylaminophenyl)diazenylbenzoate + 2 NADH + 2 H(+). Functionally, quinone reductase that provides resistance to thiol-specific stress caused by electrophilic quinones. In terms of biological role, also exhibits azoreductase activity. Catalyzes the reductive cleavage of the azo bond in aromatic azo compounds to the corresponding amines. The polypeptide is FMN-dependent NADH:quinone oxidoreductase 2 (Cupriavidus pinatubonensis (strain JMP 134 / LMG 1197) (Cupriavidus necator (strain JMP 134))).